A 402-amino-acid chain; its full sequence is S-adenosylmethionine synthase (402 aa).

H16 contacts ATP. A Mg(2+)-binding site is contributed by D18. K(+) is bound at residue E44. 2 residues coordinate L-methionine: E57 and Q103. The flexible loop stretch occupies residues 103-113 (QSPDIAQGVDT). ATP contacts are provided by residues 178-180 (DGK), 249-250 (KF), D258, 264-265 (RK), A281, and K285. D258 contacts L-methionine. An L-methionine-binding site is contributed by K289.

Belongs to the AdoMet synthase family. Homotetramer; dimer of dimers. The cofactor is Mg(2+). K(+) is required as a cofactor.

The protein resides in the cytoplasm. It carries out the reaction L-methionine + ATP + H2O = S-adenosyl-L-methionine + phosphate + diphosphate. It functions in the pathway amino-acid biosynthesis; S-adenosyl-L-methionine biosynthesis; S-adenosyl-L-methionine from L-methionine: step 1/1. Its function is as follows. Catalyzes the formation of S-adenosylmethionine (AdoMet) from methionine and ATP. The overall synthetic reaction is composed of two sequential steps, AdoMet formation and the subsequent tripolyphosphate hydrolysis which occurs prior to release of AdoMet from the enzyme. The polypeptide is S-adenosylmethionine synthase (Mycobacterium sp. (strain JLS)).